A 921-amino-acid polypeptide reads, in one-letter code: Short transient receptor potential channel 3 (921 aa).

Residues 1-73 (MSTKVRKCKE…PPFSHGPDLS (73 aa)) are disordered. Residues 1–459 (MSTKVRKCKE…KILRSPFMKF (459 aa)) are Cytoplasmic-facing. Over residues 19–31 (PEEEEDEGEDEGA) the composition is skewed to acidic residues. 4 ANK repeats span residues 111–140 (AEEE…TLNV), 146–175 (MGQN…LARI), 177–203 (DALL…FAAS), and 232–261 (PDIT…RIER). Ca(2+) is bound at residue glutamate 158. The chain crosses the membrane as a helical span at residues 460–477 (VAHAASFIIFLGLLVFNA). The Extracellular portion of the chain corresponds to 478-508 (SDRFEGITTLPNITVTDYPKQIFRVKTTQFT). N-linked (GlcNAc...) asparagine glycosylation is present at asparagine 489. The chain crosses the membrane as a helical span at residues 509-527 (WTEMLIMVWVLGMMWSECK). Residues glutamate 525, glutamate 528, and asparagine 543 each contribute to the Ca(2+) site. The Cytoplasmic portion of the chain corresponds to 528–540 (ELWLEGPREYILQ). Residues 541–562 (LWNVLDFGMLSIFIAAFTARFL) traverse the membrane as a helical segment. At 563-606 (AFLQATKAQQYVDSYVQESDLSEVTLPPEIQYFTYARDKWLPSD) the chain is on the extracellular side. The chain crosses the membrane as a helical span at residues 607–630 (PQIISEGLYAIAVVLSFSRIAYIL). Residues 631-649 (PANESFGPLQISLGRTVKD) lie on the Cytoplasmic side of the membrane. An ANK 5 repeat occupies 634-663 (ESFGPLQISLGRTVKDIFKFMVLFIMVFFA). The helical transmembrane segment at 650–673 (IFKFMVLFIMVFFAFMIGMFILYS) threads the bilayer. Residues 674–713 (YYLGAKVNAAFTTVEESFKTLFWSIFGLSEVTSVVLKYDH) lie on the Extracellular side of the membrane. The helical transmembrane segment at 714–739 (KFIENIGYVLYGIYNVTMVVVLLNML) threads the bilayer. The Cytoplasmic segment spans residues 740 to 921 (IAMINSSYQE…KLNPSMLRCE (182 aa)). Residues 850-870 (QIMKRLIKRYVLKAQVDKEND) are binds to IP3R3. 4 residues coordinate Ca(2+): glutamate 871, glutamate 874, glutamate 876, and aspartate 883.

This sequence belongs to the transient receptor (TC 1.A.4) family. STrpC subfamily. TRPC3 sub-subfamily. In terms of assembly, homotetramer. Interacts with ITPR1. Interacts with ITPR3. Interacts with MX1. Interacts with RNF24. Interacts with JPH2; the interaction is involved in maintaining Ca(2+) homeostasis in skeletal muscle and is mediated by JPH2 'Ser-165' phosphorylation. Interacts with isoform short of TRPC1. As to expression, expressed predominantly in brain and at much lower levels in ovary, colon, small intestine, lung, prostate, placenta and testis.

It localises to the cell membrane. It carries out the reaction Ca(2+)(in) = Ca(2+)(out). Its activity is regulated as follows. Activated by diacylglycerol (DAG) in a membrane-delimited fashion, independently of protein kinase C. Activated by inositol 1,4,5-triphosphate receptors (ITPR) with bound IP3. May be activated by internal calcium store depletion. Inhibited by intracellular Ca(2+). Its function is as follows. Forms a receptor-activated non-selective calcium permeant cation channel. Forms a receptor-activated non-selective calcium permeant cation channel. May be operated by a phosphatidylinositol second messenger system activated by receptor tyrosine kinases or G-protein coupled receptors. In Homo sapiens (Human), this protein is Short transient receptor potential channel 3 (TRPC3).